The primary structure comprises 696 residues: Tegument protein UL47 (696 aa).

Composition is skewed to basic residues over residues 1–15 (MSVR…RAST) and 70–81 (RRRREARGHPGS). Disordered stretches follow at residues 1-39 (MSVR…GGVG) and 54-130 (SEVE…YLGP). The RNA-binding stretch occupies residues 57 to 84 (EAAGEMASEEPPPRRRREARGHPGSRRA). The short motif at 70–84 (RRRREARGHPGSRRA) is the Nuclear localization signal element. Low complexity predominate over residues 87–103 (ARAAAPPRRASFPRPRS). Positions 650–673 (SVLGPRVRVVDIMAQFRKLLMGDE) match the Nuclear export signal motif.

This sequence belongs to the alphaherpesvirinae HHV-1 UL47 family. In terms of assembly, interacts with US3 kinase. Interacts with UL31 and UL34; these interactions seem important for efficient virion nuclear egress. Interacts with UL41/VHS. Phosphorylated by US3. This phosphorylation is required for proper nuclear localization.

The protein resides in the virion tegument. It localises to the host nucleus. The protein localises to the host cytoplasm. Tegument protein that can bind to various RNA transcripts. Plays a role in the attenuation of selective viral and cellular mRNA degradation by modulating the activity of host shutoff RNase UL41/VHS. Also plays a role in the primary envelopment of virions in the perinuclear space, probably by interacting with two nuclear egress proteins UL31 and UL34. In Human herpesvirus 2 (strain HG52) (HHV-2), this protein is Tegument protein UL47.